The primary structure comprises 603 residues: Threonine--tRNA ligase (603 aa).

A catalytic region spans residues 197 to 499 (DHRKLGKELG…LIEEYAGDFP (303 aa)). Residues Cys296, His347, and His476 each coordinate Zn(2+).

This sequence belongs to the class-II aminoacyl-tRNA synthetase family. In terms of assembly, homodimer. Zn(2+) serves as cofactor.

The protein resides in the cytoplasm. It catalyses the reaction tRNA(Thr) + L-threonine + ATP = L-threonyl-tRNA(Thr) + AMP + diphosphate + H(+). In terms of biological role, catalyzes the attachment of threonine to tRNA(Thr) in a two-step reaction: L-threonine is first activated by ATP to form Thr-AMP and then transferred to the acceptor end of tRNA(Thr). Also edits incorrectly charged L-seryl-tRNA(Thr). In Synechocystis sp. (strain ATCC 27184 / PCC 6803 / Kazusa), this protein is Threonine--tRNA ligase.